Here is a 279-residue protein sequence, read N- to C-terminus: ESX-1 secretion-associated protein EspG1 (279 aa).

This sequence belongs to the EspG family. In terms of assembly, interacts specifically with ESX-1-dependent PE/PPE proteins.

Its subcellular location is the cytoplasm. Functionally, specific chaperone for cognate PE/PPE proteins. Plays an important role in preventing aggregation of PE/PPE dimers. This chain is ESX-1 secretion-associated protein EspG1, found in Mycobacterium marinum (strain ATCC BAA-535 / M).